Consider the following 468-residue polypeptide: Sorting and assembly machinery component 50 homolog B (468 aa).

The tract at residues 1–25 is disordered; it reads MGTVHARSLDPLPMNGPDFGSPDDA. The POTRA domain maps to 44–124; that stretch reads VVVQRVHFEG…LDVTFEVTEL (81 aa).

It belongs to the SAM50/omp85 family. As to quaternary structure, associates with the mitochondrial contact site and cristae organizing system (MICOS) complex (also known as MINOS or MitOS complex).

It is found in the mitochondrion outer membrane. May play a role in the maintenance of the structure of mitochondrial cristae. This Xenopus laevis (African clawed frog) protein is Sorting and assembly machinery component 50 homolog B (samm50-b).